Here is a 298-residue protein sequence, read N- to C-terminus: MFKSGFVTIVGRPNVGKSTLLNYIMGEKLSIVSNKPQTTRNNIQTILTGDDYQMIFVDTPGIHKPKHKLGEYMVNSAKESTKDVDLVLFLTNPDEEIGKGDKFILETLRDKKCPVFLVLNKVDESTQDRVAKSLEMYSKEFKFAEIVPISAIKGKNVDVLVELMKKAMPEGPKYYPDDMITDVQEKFVVSEIIREKALRTLRDEVPHGIAVDIIQMKQNEIGTYHIEVDLICEKDSHKGIIIGKNGQTLKRIGENSRYELERFLRSKVNLKIWVKVRKEWRDNQLLLKELGYKANSKK.

An Era-type G domain is found at 3–170 (KSGFVTIVGR…VELMKKAMPE (168 aa)). A G1 region spans residues 11–18 (GRPNVGKS). 11–18 (GRPNVGKS) provides a ligand contact to GTP. Residues 37–41 (QTTRN) form a G2 region. A G3 region spans residues 58–61 (DTPG). Residues 58–62 (DTPGI) and 120–123 (NKVD) each bind GTP. The tract at residues 120 to 123 (NKVD) is G4. Residues 149-151 (ISA) form a G5 region. The region spanning 201–278 (LRDEVPHGIA…NLKIWVKVRK (78 aa)) is the KH type-2 domain.

Belongs to the TRAFAC class TrmE-Era-EngA-EngB-Septin-like GTPase superfamily. Era GTPase family. As to quaternary structure, monomer.

The protein resides in the cytoplasm. Its subcellular location is the cell membrane. Functionally, an essential GTPase that binds both GDP and GTP, with rapid nucleotide exchange. Plays a role in 16S rRNA processing and 30S ribosomal subunit biogenesis and possibly also in cell cycle regulation and energy metabolism. This is GTPase Era from Clostridium beijerinckii (strain ATCC 51743 / NCIMB 8052) (Clostridium acetobutylicum).